Reading from the N-terminus, the 261-residue chain is Glutamate racemase (261 aa).

Substrate-binding positions include 7-8 (DS) and 39-40 (YG). The active-site Proton donor/acceptor is the C71. 72-73 (NT) provides a ligand contact to substrate. The active-site Proton donor/acceptor is the C184. 185-186 (TH) contacts substrate.

Belongs to the aspartate/glutamate racemases family.

It carries out the reaction L-glutamate = D-glutamate. It functions in the pathway cell wall biogenesis; peptidoglycan biosynthesis. Functionally, provides the (R)-glutamate required for cell wall biosynthesis. The polypeptide is Glutamate racemase (Aliarcobacter butzleri (strain RM4018) (Arcobacter butzleri)).